The primary structure comprises 486 residues: Hexokinase-2 (486 aa).

A Phosphoserine modification is found at Ser-15. In terms of domain architecture, Hexokinase spans 21 to 469 (KELMQQIENF…SGAGAAVIAA (449 aa)). Position 38 is a phosphothreonine (Thr-38). The hexokinase small subdomain stretch occupies residues 75-209 (TGKESGDFLA…NIPIEVVALI (135 aa)). ATP contacts are provided by residues 86–91 (DLGGTN) and Lys-111. Ser-158 is subject to Phosphoserine. Substrate contacts are provided by residues Ser-158, 175–176 (TK), 210–211 (ND), and Asn-237. Residues 210-458 (NDTTGTLVAS…YPIKIVPAED (249 aa)) are hexokinase large subdomain. Position 245 is a phosphoserine (Ser-245). Residue Glu-269 participates in substrate binding. Ser-272 is modified (phosphoserine). Glu-302 contributes to the substrate binding site. Residues 307-308 (GY), 344-348 (TSYPA), and 419-423 (SVYNR) each bind ATP.

Belongs to the hexokinase family. As to quaternary structure, homodimer.

The catalysed reaction is a D-hexose + ATP = a D-hexose 6-phosphate + ADP + H(+). It carries out the reaction D-fructose + ATP = D-fructose 6-phosphate + ADP + H(+). The enzyme catalyses D-glucose + ATP = D-glucose 6-phosphate + ADP + H(+). It participates in carbohydrate metabolism; hexose metabolism. The protein operates within carbohydrate degradation; glycolysis; D-glyceraldehyde 3-phosphate and glycerone phosphate from D-glucose: step 1/4. Subject to allosteric control. Substrate inhibition by ATP. Functionally, catalyzes the phosphorylation of hexose, such as D-glucose and D-fructose, to hexose 6-phosphate (D-glucose 6-phosphate and D-fructose 6-phosphate, respectively). Mediates the initial step of glycolysis by catalyzing phosphorylation of D-glucose to D-glucose 6-phosphate. This Saccharomyces cerevisiae (strain ATCC 204508 / S288c) (Baker's yeast) protein is Hexokinase-2 (HXK2).